Here is a 64-residue protein sequence, read N- to C-terminus: U6-theraphotoxin-Cg1a (64 aa).

An N-terminal signal peptide occupies residues M1 to A20. A propeptide spanning residues E21–R38 is cleaved from the precursor. 3 disulfides stabilise this stretch: C39/C55, C46/C58, and C54/C63.

Belongs to the neurotoxin 36 family. 02 subfamily. In terms of tissue distribution, expressed by the venom gland.

It localises to the secreted. In terms of biological role, probable ion channel inhibitor. This Chilobrachys guangxiensis (Chinese earth tiger tarantula) protein is U6-theraphotoxin-Cg1a.